Consider the following 100-residue polypeptide: Dromyosuppressin (100 aa).

Positions 1–24 (MSFAQFFVACCLAIVLLAVSNTRA) are cleaved as a signal peptide. A propeptide spanning residues 25 to 84 (AVQGPPLCQSGIVEEMPPHIRKVCQALENSDQLTSALKSYINNEASALVANSDDLLKNYN) is cleaved from the precursor. A Phenylalanine amide modification is found at Phe96.

The protein belongs to the myosuppressin family.

It is found in the secreted. Myoinhibiting neuropeptide. In Drosophila melanogaster (Fruit fly), this protein is Dromyosuppressin.